Reading from the N-terminus, the 96-residue chain is Co-chaperonin GroES (96 aa).

This sequence belongs to the GroES chaperonin family. Heptamer of 7 subunits arranged in a ring. Interacts with the chaperonin GroEL.

It is found in the cytoplasm. Functionally, together with the chaperonin GroEL, plays an essential role in assisting protein folding. The GroEL-GroES system forms a nano-cage that allows encapsulation of the non-native substrate proteins and provides a physical environment optimized to promote and accelerate protein folding. GroES binds to the apical surface of the GroEL ring, thereby capping the opening of the GroEL channel. This chain is Co-chaperonin GroES, found in Histophilus somni (strain 129Pt) (Haemophilus somnus).